The primary structure comprises 308 residues: MRILLIAGGWSEERDVSLSGARGIHAALERLGHQVTLFDPCRTLAGLLEAAQAHDFAFLNLHGQPGEDGLVQALLETAGVPYQGSGPAGSFLALNKAAAKEVFVRNGLPTPEWVFLPAHPGADWEPPFAFPAFIKSNNGGSSLALHRVSCPGELARALDELFTRGGEAIIEPAVEGVEVTCGVLGDEALPPILIRPLGAGFFDYASKYTPGQAEELCPAPLPGEVTAKVREYALRAHRALGLRGYSRSDFILTPAGALSLLEVNTLPGMTATSLLPQEAAAVGISFDGLIGRLIELGLAAHGKQQEKA.

One can recognise an ATP-grasp domain in the interval 100–295; the sequence is KEVFVRNGLP…FDGLIGRLIE (196 aa). An ATP-binding site is contributed by 127 to 180; that stretch reads PFAFPAFIKSNNGGSSLALHRVSCPGELARALDELFTRGGEAIIEPAVEGVEVT. Residues aspartate 249, glutamate 262, and asparagine 264 each contribute to the Mg(2+) site.

It belongs to the D-alanine--D-alanine ligase family. Mg(2+) serves as cofactor. Mn(2+) is required as a cofactor.

Its subcellular location is the cytoplasm. The enzyme catalyses 2 D-alanine + ATP = D-alanyl-D-alanine + ADP + phosphate + H(+). The protein operates within cell wall biogenesis; peptidoglycan biosynthesis. Functionally, cell wall formation. The sequence is that of D-alanine--D-alanine ligase from Oleidesulfovibrio alaskensis (strain ATCC BAA-1058 / DSM 17464 / G20) (Desulfovibrio alaskensis).